Consider the following 468-residue polypeptide: Argininosuccinate lyase (468 aa).

It belongs to the lyase 1 family. Argininosuccinate lyase subfamily.

It is found in the cytoplasm. The enzyme catalyses 2-(N(omega)-L-arginino)succinate = fumarate + L-arginine. Its pathway is amino-acid biosynthesis; L-arginine biosynthesis; L-arginine from L-ornithine and carbamoyl phosphate: step 3/3. This is Argininosuccinate lyase from Paraburkholderia phytofirmans (strain DSM 17436 / LMG 22146 / PsJN) (Burkholderia phytofirmans).